A 366-amino-acid chain; its full sequence is 5-hydroxytryptamine receptor 1F (366 aa).

Residues 1 to 24 (MDFLNSSDQNLTSEELLNRMPSKI) lie on the Extracellular side of the membrane. Asn5 and Asn10 each carry an N-linked (GlcNAc...) asparagine glycan. Residues 25 to 49 (LVSLTLSGLALMTTTINCLVITAII) form a helical membrane-spanning segment. Residues 50-59 (VTRKLHHPAN) lie on the Cytoplasmic side of the membrane. Residues 60–81 (YLICSLAVTDFLVAVLVMPFSI) traverse the membrane as a helical segment. The Extracellular portion of the chain corresponds to 82–96 (VYIVRESWIMGQGLC). A disulfide bridge connects residues Cys96 and Cys172. A helical membrane pass occupies residues 97 to 119 (DLWLSVDIICCTCSILHLSAIAL). Serotonin is bound by residues Asp103 and Cys107. Positions 120-122 (DRY) match the DRY motif; important for ligand-induced conformation changes motif. Over 120–139 (DRYRAITDAVEYARKRTPRH) the chain is Cytoplasmic. A helical membrane pass occupies residues 140 to 159 (AGITITTVWVISVFISVPPL). Residues 160-178 (FWRHQGNSRDDQCIIKHDH) lie on the Extracellular side of the membrane. A helical transmembrane segment spans residues 179–202 (IVSTIYSTFGAFYIPLVLILILYY). Topologically, residues 203–291 (KIYRAARTLY…KISGTRERKA (89 aa)) are cytoplasmic. A helical membrane pass occupies residues 292–315 (ATTLGLILGAFVICWLPFFVKELV). The Extracellular segment spans residues 316-327 (VNICEKCKISEE). A helical transmembrane segment spans residues 328–350 (MSNFLAWLGYLNSLINPLIYTIF). Residues 343–347 (NPLIY) carry the NPxxY motif; important for ligand-induced conformation changes and signaling motif. Topologically, residues 351–366 (NEDFKKAFQKLVRCRN) are cytoplasmic.

This sequence belongs to the G-protein coupled receptor 1 family.

It is found in the cell membrane. G-protein coupled receptor for 5-hydroxytryptamine (serotonin). Also functions as a receptor for various alkaloids and psychoactive substances. Ligand binding causes a conformation change that triggers signaling via guanine nucleotide-binding proteins (G proteins) and modulates the activity of downstream effectors, such as adenylate cyclase. HTR1F is coupled to G(i)/G(o) G alpha proteins and mediates inhibitory neurotransmission by inhibiting adenylate cyclase activity. The protein is 5-hydroxytryptamine receptor 1F (Htr1f) of Rattus norvegicus (Rat).